We begin with the raw amino-acid sequence, 371 residues long: 4-hydroxy-3-methylbut-2-en-1-yl diphosphate synthase (flavodoxin) (371 aa).

[4Fe-4S] cluster-binding residues include Cys-270, Cys-273, Cys-305, and Glu-312.

It belongs to the IspG family. [4Fe-4S] cluster is required as a cofactor.

It catalyses the reaction (2E)-4-hydroxy-3-methylbut-2-enyl diphosphate + oxidized [flavodoxin] + H2O + 2 H(+) = 2-C-methyl-D-erythritol 2,4-cyclic diphosphate + reduced [flavodoxin]. Its pathway is isoprenoid biosynthesis; isopentenyl diphosphate biosynthesis via DXP pathway; isopentenyl diphosphate from 1-deoxy-D-xylulose 5-phosphate: step 5/6. In terms of biological role, converts 2C-methyl-D-erythritol 2,4-cyclodiphosphate (ME-2,4cPP) into 1-hydroxy-2-methyl-2-(E)-butenyl 4-diphosphate. In Shewanella loihica (strain ATCC BAA-1088 / PV-4), this protein is 4-hydroxy-3-methylbut-2-en-1-yl diphosphate synthase (flavodoxin).